The primary structure comprises 384 residues: Putative pectate lyase 2 (384 aa).

Positions 1 to 23 (MASLFLTIISLLFAAFSSSVVEA) are cleaved as a signal peptide. Positions 182, 206, and 210 each coordinate Ca(2+). Arginine 262 is a catalytic residue.

It belongs to the polysaccharide lyase 1 family. Ca(2+) is required as a cofactor.

The enzyme catalyses Eliminative cleavage of (1-&gt;4)-alpha-D-galacturonan to give oligosaccharides with 4-deoxy-alpha-D-galact-4-enuronosyl groups at their non-reducing ends.. The protein operates within glycan metabolism; pectin degradation; 2-dehydro-3-deoxy-D-gluconate from pectin: step 2/5. The protein is Putative pectate lyase 2 of Arabidopsis thaliana (Mouse-ear cress).